The sequence spans 270 residues: 2-dehydro-3-deoxyphosphooctonate aldolase (270 aa).

This sequence belongs to the KdsA family.

It is found in the cytoplasm. It catalyses the reaction D-arabinose 5-phosphate + phosphoenolpyruvate + H2O = 3-deoxy-alpha-D-manno-2-octulosonate-8-phosphate + phosphate. It participates in carbohydrate biosynthesis; 3-deoxy-D-manno-octulosonate biosynthesis; 3-deoxy-D-manno-octulosonate from D-ribulose 5-phosphate: step 2/3. It functions in the pathway bacterial outer membrane biogenesis; lipopolysaccharide biosynthesis. In Helicobacter hepaticus (strain ATCC 51449 / 3B1), this protein is 2-dehydro-3-deoxyphosphooctonate aldolase.